Reading from the N-terminus, the 372-residue chain is MTTAQHQHYTVEVGDTNFTIHSRYINLRPIGSGAQGIVCAAYDTITQQNVAIKKLSRPFQNVTHAKRAYREFKLMKLVNHKNIIGLLNAFTPQRNLEEFQDVYLVMELMDANLCQVIQMDLDHDRMSYLLYQMLCGIKHLHSAGIIHRDLKPSNIVVKADCTLKILDFGLARTAGTTFMMTPYVVTRYYRAPEVILGMGYTENVDIWSVGCIMGEMIRGGVLFPGTDHIDQWNKIIEQLGTPSPSFMQRLQPTVRNYVENRPRYTGYSFDRLFPDGLFPNDNNQNSRRKASDARNLLSKMLVIDPEQRISVDEALKHEYINVWYDAEEVDAPAPEPYDHSVDEREHTVEQWKELIYEEVMDYEAHNTNNRTR.

One can recognise a Protein kinase domain in the interval 24–320 (YINLRPIGSG…VDEALKHEYI (297 aa)). ATP is bound by residues 31–36 (GSGAQG) and Lys53. Catalysis depends on Asp149, which acts as the Proton acceptor. The residue at position 181 (Thr181) is a Phosphothreonine. A TXY motif is present at residues 181 to 183 (TPY). Residue Tyr183 is modified to Phosphotyrosine.

It belongs to the protein kinase superfamily. CMGC Ser/Thr protein kinase family. MAP kinase subfamily. Interacts with MKP-4 (via tyrosine-protein phosphatase domain); the interaction dephosphorylates bsk. Requires Mg(2+) as cofactor. In terms of processing, dually phosphorylated on Thr-181 and Tyr-183, which activates the enzyme. As to expression, during gastrulation, expression is seen in cells undergoing morphogenetic movements. By stage 9 of embryonic development, expression is ubiquitous. At stages 12-14, expression occurs in epidermis and central nervous system. At stage 15, expression is restricted to ventral nerve cord, brain and some peripheral neurons. In larvae, expression is seen in all imaginal disks, with highest levels in wing and eye disks, and in the CNS. Adults express the protein in fat body and hemocytes.

The protein resides in the nucleus. It localises to the cytoplasm. It catalyses the reaction L-seryl-[protein] + ATP = O-phospho-L-seryl-[protein] + ADP + H(+). The enzyme catalyses L-threonyl-[protein] + ATP = O-phospho-L-threonyl-[protein] + ADP + H(+). Its activity is regulated as follows. Activated by threonine and tyrosine phosphorylation by the dual specificity kinase, hep. Inhibited by dual specificity phosphatase, puckered. Functionally, mitogen-activated protein kinase and key component of the c-Jun N-terminal kinase (JNK) pathway which phosphorylate and activate transcription factors involved in a wide range of biological processes including response to various stresses, cellular proliferation, differentiation and migration, and regulation of cell shape. Responds to activation by environmental stress by phosphorylating a number of transcription factors, primarily components of AP-1 such as Jra and also the transcriptional repressor aop, and thus regulates transcriptional activity. Component of the immune response activated by bacterial infection, and is involved in wound healing and in dorsal closure, a morphogenetic movement during embryogenesis. Functions in the systematic response to wounding acting downstream of the Hayan-phenoloxidase PPO1 cascade. During epidermal wound healing involved in cellular polarization by inducing the translocation of sktl and mys/integrin beta to the trailing edge. Exhibits cytoprotective activity in neuronal cells in response to wounding to the integument. Controls the expression of a phosphatase, puckered, at the edges of wounded epidermal tissue and in the dorsal epithelium during dorsal closure. Regulates the activity of SREBP in neurons and thereby the accumulation of lipids in glia. Plays a role in positively regulating the expression of DIP2 independently of AP-1, thereby ensuring proper axon guidance in mushroom bodies. In enterocytes and differentiating progenitors of the gut that are experiencing inorganic phosphate (Pi) deficiency, activated by Cka to induce nearby progenitor cells to proliferate and form new absorptive cells, probably helping the organism to cope with the nutrient deficiency by maximizing absorption of dietary Pi. The polypeptide is Stress-activated protein kinase JNK (Drosophila melanogaster (Fruit fly)).